The following is a 729-amino-acid chain: Carbon monoxide dehydrogenase/acetyl-CoA synthase subunit alpha (729 aa).

[4Fe-4S] cluster contacts are provided by Cys506, Cys509, Cys518, and Cys528. Cys509 serves as a coordination point for Ni(2+). Cys595, Gly596, and Cys597 together coordinate Ni(2+).

Tetramer of two alpha and two beta chains. It depends on Ni cation as a cofactor. The cofactor is [4Fe-4S] cluster.

It catalyses the reaction Co(I)-[corrinoid Fe-S protein] + acetyl-CoA + H(+) = methyl-Co(III)-[corrinoid Fe-S protein] + CO + CoA. In terms of biological role, the beta subunit generates CO from CO(2), while the alpha subunit (this protein) combines the CO with CoA and a methyl group to form acetyl-CoA. The methyl group, which is incorporated into acetyl-CoA, is transferred to the alpha subunit by a corrinoid iron-sulfur protein. This Moorella thermoacetica (Clostridium thermoaceticum) protein is Carbon monoxide dehydrogenase/acetyl-CoA synthase subunit alpha.